Consider the following 141-residue polypeptide: Transcription antitermination protein NusB (141 aa).

It belongs to the NusB family.

Involved in transcription antitermination. Required for transcription of ribosomal RNA (rRNA) genes. Binds specifically to the boxA antiterminator sequence of the ribosomal RNA (rrn) operons. The polypeptide is Transcription antitermination protein NusB (Desulfotalea psychrophila (strain LSv54 / DSM 12343)).